Consider the following 77-residue polypeptide: U3-theraphotoxin-Hhn1k (77 aa).

Residues 1–14 form the signal peptide; sequence TFAGLVLLFVVCYA. Residues 15–42 constitute a propeptide that is removed on maturation; that stretch reads SESEEKEFPKEMLSSIFAVDNDFKQEER. Intrachain disulfides connect Cys44/Cys57 and Cys56/Cys69.

This sequence belongs to the neurotoxin 10 (Hwtx-1) family. 51 (Hntx-8) subfamily. Hntx-8 sub-subfamily. As to expression, expressed by the venom gland.

It is found in the secreted. Ion channel inhibitor. The protein is U3-theraphotoxin-Hhn1k of Cyriopagopus hainanus (Chinese bird spider).